We begin with the raw amino-acid sequence, 457 residues long: MDTQPQSNHPSVISAQLTPYDALDLAFTFEDRHQHEWWKRAGPVLGLTMRHARYDLNKQYQYLAFFARQIIPLLGPFPESAGSDYQRGFIPLEVSQNFQQSGTTVRLCFEPRTYSGYAIAKDPFGDLLVQEVVAKLGQVRGVKVDLQMFRQLASILNLTKDEEEELYQPACYENLPPTFKIQNIVGIQLPRSGNITLKADWFLSAKSLVSTIPITELSFEAIRTVDQGKNLFTPGLRPIEEYFRSMEMQPASPSHPRTTEFNAIACHLDDSTNARLKIYLSERLLKFDRVADIWTLGGRLKNCPGISQGLELVRALWSILQIKEGHHFPLAVNSLMMKGGDPASLAAAEKEDYPETQFFDEQFLVLNFEIRPGDPWPQPKIYFLLTELADNKVADAVVALFNRLGWVEEASRYKENLAAYYPHRDLDKTSGLQRFLSFSYSAKNGPYTSVYHWGIGG.

Dimethylallyl diphosphate-binding residues include Arg106, Lys198, Lys277, Tyr279, Tyr382, Tyr447, and Tyr451.

Belongs to the tryptophan dimethylallyltransferase family.

Its pathway is secondary metabolite biosynthesis. Its function is as follows. Nonribosomal peptide synthetase that mediates the biosynthesis of usterphenyllins and uscandidusins, p-terphenyl derivatives. Within the pathway, ucdE prenylates position C-5 of ring A of 3,15-dihydroxyterphenyllin to produce forms usterphenyllin B. UcdE further prenylates position C-14 of ring C of usterphenyllin B to form usterphenyllin A. The pathway begin with the biosynthesis of 4-hydroxyphenylpyruvate (HPPA) from L-tyrosine, possibly by the aminotransferase ucdG. The nonribosomal peptide synthetase ucdA then condenses two HPPA units to produce atromentin. The key step in this pathway is the reduction and dehydration of atromentin to form a terphenyl triol intermediate, performed by the NAD-dependent dehydrogenase ucdB. Further O-methylation by the methyltransferase ucdC forms terphenyllin carrying two methoxy moieties at C-9 and C-12, and subsequent dihydroxylation at C-3 of ring A and C-15 of ring C by the flavin-dependent oxygenase ucdD leads to 3,15-dihydroxyterphenyllin. Prenylation by ucdE at position C-5 of ring A forms usterphenyllin B, and is followed by a second prenylation at position C-14 of ring C to form usterphenyllin A. The following furan ring formation that leads to uscandidusins A and B was proven to be an unexpected spontaneous non-enzymatic reaction. The protein is Prenyltransferase ucdE of Aspergillus ustus.